Consider the following 859-residue polypeptide: Fanconi anemia group B protein (859 aa).

At T2 the chain carries N-acetylthreonine.

As to quaternary structure, belongs to the multisubunit FA complex composed of FANCA, FANCB, FANCC, FANCE, FANCF, FANCG, FANCL/PHF9 and FANCM. The complex is not found in FA patients.

The protein resides in the nucleus. In terms of biological role, DNA repair protein required for FANCD2 ubiquitination. The chain is Fanconi anemia group B protein (FANCB) from Homo sapiens (Human).